Consider the following 473-residue polypeptide: Biotin-dependent acetyl-/propionyl-coenzyme A carboxylase beta6 subunit (473 aa).

The region spanning 1–224 is the CoA carboxyltransferase N-terminal domain; sequence MTIMAPEAVG…QGHFDRSKAE (224 aa). The region spanning 225–473 is the CoA carboxyltransferase C-terminal domain; it reads AGDTDIHALL…RRGRHKNIPL (249 aa).

The protein belongs to the AccD/PCCB family. The biotin-dependent acyl-CoA carboxylase complex is composed of AccA3, which contains the biotin carboxylase (BC) and biotin carboxyl carrier protein (BCCP) domains, and AccD6, which contains the carboxyl transferase (CT) domain.

The catalysed reaction is N(6)-carboxybiotinyl-L-lysyl-[protein] + acetyl-CoA = N(6)-biotinyl-L-lysyl-[protein] + malonyl-CoA. The enzyme catalyses N(6)-carboxybiotinyl-L-lysyl-[protein] + propanoyl-CoA = methylmalonyl-CoA + N(6)-biotinyl-L-lysyl-[protein]. It functions in the pathway lipid metabolism; fatty acid biosynthesis. It participates in lipid metabolism; mycolic acid biosynthesis. Functionally, component of a biotin-dependent acyl-CoA carboxylase complex. This subunit transfers the CO2 from carboxybiotin to the CoA ester substrate. When associated with the alpha3 subunit AccA3, is involved in the carboxylation of acetyl-CoA and propionyl-CoA. This is Biotin-dependent acetyl-/propionyl-coenzyme A carboxylase beta6 subunit (accD6) from Mycobacterium bovis (strain ATCC BAA-935 / AF2122/97).